We begin with the raw amino-acid sequence, 424 residues long: GTPase Obg (424 aa).

In terms of domain architecture, Obg spans Met1–Leu158. The 171-residue stretch at Ala159–Pro329 folds into the OBG-type G domain. Residues Gly165 to Ser172, Phe190 to Val194, Asp212 to Gly215, Asn282 to Asp285, and Ser310 to Ala312 contribute to the GTP site. The Mg(2+) site is built by Ser172 and Thr192. Residues Thr347–Glu424 form the OCT domain.

Belongs to the TRAFAC class OBG-HflX-like GTPase superfamily. OBG GTPase family. As to quaternary structure, monomer. It depends on Mg(2+) as a cofactor.

The protein localises to the cytoplasm. An essential GTPase which binds GTP, GDP and possibly (p)ppGpp with moderate affinity, with high nucleotide exchange rates and a fairly low GTP hydrolysis rate. Plays a role in control of the cell cycle, stress response, ribosome biogenesis and in those bacteria that undergo differentiation, in morphogenesis control. In Desulfitobacterium hafniense (strain DSM 10664 / DCB-2), this protein is GTPase Obg.